The chain runs to 117 residues: Large ribosomal subunit protein bL19 (117 aa).

The protein belongs to the bacterial ribosomal protein bL19 family.

Its function is as follows. This protein is located at the 30S-50S ribosomal subunit interface and may play a role in the structure and function of the aminoacyl-tRNA binding site. This chain is Large ribosomal subunit protein bL19, found in Methylibium petroleiphilum (strain ATCC BAA-1232 / LMG 22953 / PM1).